The primary structure comprises 445 residues: GTPase Der (445 aa).

EngA-type G domains are found at residues 3-167 (PVIA…YAGQ) and 180-353 (IKIA…AAAM). Residues 9-16 (GRPNVGKS), 56-60 (DTGGF), 119-122 (NKAE), 186-193 (GRPNVGKS), 233-237 (DTAGL), and 298-301 (NKWD) each bind GTP. One can recognise a KH-like domain in the interval 354 to 438 (SKLPTPKLTR…PLRIEFRSSN (85 aa)).

Belongs to the TRAFAC class TrmE-Era-EngA-EngB-Septin-like GTPase superfamily. EngA (Der) GTPase family. In terms of assembly, associates with the 50S ribosomal subunit.

Its function is as follows. GTPase that plays an essential role in the late steps of ribosome biogenesis. This is GTPase Der from Burkholderia cenocepacia (strain ATCC BAA-245 / DSM 16553 / LMG 16656 / NCTC 13227 / J2315 / CF5610) (Burkholderia cepacia (strain J2315)).